Here is a 1060-residue protein sequence, read N- to C-terminus: Carbamoyl phosphate synthase large chain (1060 aa).

The tract at residues 1–401 (MPKRTDIRKI…SLLKACRSLE (401 aa)) is carboxyphosphate synthetic domain. The ATP site is built by R129, R169, G175, G176, R208, I210, E215, G241, I242, H243, Q284, and E298. The ATP-grasp 1 domain maps to 133–327 (KQLMEELNQP…IAKLAAKIAV (195 aa)). The Mg(2+) site is built by Q284, E298, and N300. Residues Q284, E298, and N300 each coordinate Mn(2+). Positions 402 to 546 (IGVDHIKIAD…YSTYAVENES (145 aa)) are oligomerization domain. The interval 547–929 (LISDKASILV…ALYKAFEAAY (383 aa)) is carbamoyl phosphate synthetic domain. The ATP-grasp 2 domain occupies 671–861 (EATLQALNIP…MAQVATKVIL (191 aa)). Residues R707, A746, L748, E752, G777, V778, H779, S780, Q820, and E832 each contribute to the ATP site. 3 residues coordinate Mg(2+): Q820, E832, and N834. Positions 820, 832, and 834 each coordinate Mn(2+). An MGS-like domain is found at 930 to 1060 (LHMPDYGNIV…SRAFTLKVLD (131 aa)). The segment at 930–1060 (LHMPDYGNIV…SRAFTLKVLD (131 aa)) is allosteric domain.

It belongs to the CarB family. Composed of two chains; the small (or glutamine) chain promotes the hydrolysis of glutamine to ammonia, which is used by the large (or ammonia) chain to synthesize carbamoyl phosphate. Tetramer of heterodimers (alpha,beta)4. The cofactor is Mg(2+). Mn(2+) is required as a cofactor.

The enzyme catalyses hydrogencarbonate + L-glutamine + 2 ATP + H2O = carbamoyl phosphate + L-glutamate + 2 ADP + phosphate + 2 H(+). It carries out the reaction hydrogencarbonate + NH4(+) + 2 ATP = carbamoyl phosphate + 2 ADP + phosphate + 2 H(+). Its pathway is amino-acid biosynthesis; L-arginine biosynthesis; carbamoyl phosphate from bicarbonate: step 1/1. The protein operates within pyrimidine metabolism; UMP biosynthesis via de novo pathway; (S)-dihydroorotate from bicarbonate: step 1/3. Its function is as follows. Large subunit of the glutamine-dependent carbamoyl phosphate synthetase (CPSase). CPSase catalyzes the formation of carbamoyl phosphate from the ammonia moiety of glutamine, carbonate, and phosphate donated by ATP, constituting the first step of 2 biosynthetic pathways, one leading to arginine and/or urea and the other to pyrimidine nucleotides. The large subunit (synthetase) binds the substrates ammonia (free or transferred from glutamine from the small subunit), hydrogencarbonate and ATP and carries out an ATP-coupled ligase reaction, activating hydrogencarbonate by forming carboxy phosphate which reacts with ammonia to form carbamoyl phosphate. The sequence is that of Carbamoyl phosphate synthase large chain from Streptococcus agalactiae serotype Ia (strain ATCC 27591 / A909 / CDC SS700).